We begin with the raw amino-acid sequence, 408 residues long: MGIKQWLLSLVVVAISATATQARVDDPAGKAAQYHKEYALFRSANMPSPDKLASGVGFHSFRIPAVVRTNTGRILAFAEGRRHNNRDYGDINLVYKRTKSPTNNGENPTDWESLREVVGTGPHTWGNPTPVVDGNTIYLFLSMNDGAYSQNGGNTLPDGTKTKTIDSTWVGRRHLYLTTSTDDGDTWTKPVDMTKTLTPDGQAWDAVGPGNGIKLSTGELVIPAQGRNIIGHGPSGNRTWSMQVLKGAGSEGTICQTPDGKLMRNDRPGPMGHRSVARGTLAGFGPFATDNGLPDPACQGSILSYNSDEPARTIFMNSASTDRRTAMRVRISYDKDAAKFNFGRELKDAPLGNVGNEGGYSSMTKTSDYKIGALVESDWYEDKGGEKSHRCIIWRRFNLSWIINGPNN.

The first 22 residues, 1 to 22 (MGIKQWLLSLVVVAISATATQA), serve as a signal peptide directing secretion. R62, R81, D87, and Q150 together coordinate substrate. N-linked (GlcNAc...) asparagine glycosylation occurs at N237. Substrate is bound by residues R267, R324, 324 to 325 (RT), 333 to 334 (YD), K339, Y360, D378, and 378 to 380 (DWY). An N-linked (GlcNAc...) asparagine glycan is attached at N398.

The protein belongs to the glycosyl hydrolase 33 family.

The protein resides in the secreted. It carries out the reaction Hydrolysis of alpha-(2-&gt;3)-, alpha-(2-&gt;6)-, alpha-(2-&gt;8)- glycosidic linkages of terminal sialic acid residues in oligosaccharides, glycoproteins, glycolipids, colominic acid and synthetic substrates.. Its function is as follows. Sialidase is able to release sialic acid from a wide variety of natural substrates. The chain is Exo-alpha-sialidase ARB_03431 from Arthroderma benhamiae (strain ATCC MYA-4681 / CBS 112371) (Trichophyton mentagrophytes).